The sequence spans 378 residues: Inner membrane protein YibH (378 aa).

Residues 1–3 (MDL) lie on the Periplasmic side of the membrane. A helical membrane pass occupies residues 4-24 (LIVLTYVALAWAVFKIFRIPV). Topologically, residues 25–26 (NQ) are cytoplasmic. The chain crosses the membrane as a helical span at residues 27-47 (WTLATAALGGVFLVSGLILLM). At 48–54 (NYNHPYT) the chain is on the periplasmic side. The chain crosses the membrane as a helical span at residues 55–75 (FTAQKAVIAIPITPQVTGIVT). The Cytoplasmic segment spans residues 76–232 (EVTDKNNQLI…RAPSNGYVTQ (157 aa)). A helical membrane pass occupies residues 233–253 (VLIRPGTYAAALPLRPVMVFI). The Periplasmic segment spans residues 254–280 (PEQKRQIVAQFRQNSLLRLKPGDDAEV). Residues 281–301 (VFNALPGQVFHGKLTSILPVV) traverse the membrane as a helical segment. Topologically, residues 302 to 309 (PGGSYQAQ) are cytoplasmic. The helical transmembrane segment at 310–330 (GVLQSLTVVPGTDGVLGTIEL) threads the bilayer. Residues 331–378 (DPNDDIDALPDGIYAQVAVYSDHFSHVSVMRKVLLRMTSWMHYLYLDH) lie on the Periplasmic side of the membrane.

Belongs to the membrane fusion protein (MFP) (TC 8.A.1) family.

It localises to the cell inner membrane. In Escherichia coli O157:H7, this protein is Inner membrane protein YibH (yibH).